A 209-amino-acid polypeptide reads, in one-letter code: Ribosomal RNA large subunit methyltransferase E (209 aa).

Residues Gly63, Trp65, Asp83, Asp99, and Asp124 each contribute to the S-adenosyl-L-methionine site. Lys164 serves as the catalytic Proton acceptor.

This sequence belongs to the class I-like SAM-binding methyltransferase superfamily. RNA methyltransferase RlmE family.

The protein resides in the cytoplasm. It carries out the reaction uridine(2552) in 23S rRNA + S-adenosyl-L-methionine = 2'-O-methyluridine(2552) in 23S rRNA + S-adenosyl-L-homocysteine + H(+). Specifically methylates the uridine in position 2552 of 23S rRNA at the 2'-O position of the ribose in the fully assembled 50S ribosomal subunit. The sequence is that of Ribosomal RNA large subunit methyltransferase E from Vibrio campbellii (strain ATCC BAA-1116).